The primary structure comprises 200 residues: Large ribosomal subunit protein uL4 (200 aa).

The interval 43–71 is disordered; the sequence is RAQKTRAEVSGSGKKPWRQKGTGRARSGD.

This sequence belongs to the universal ribosomal protein uL4 family. Part of the 50S ribosomal subunit.

One of the primary rRNA binding proteins, this protein initially binds near the 5'-end of the 23S rRNA. It is important during the early stages of 50S assembly. It makes multiple contacts with different domains of the 23S rRNA in the assembled 50S subunit and ribosome. Its function is as follows. Forms part of the polypeptide exit tunnel. The protein is Large ribosomal subunit protein uL4 of Aggregatibacter actinomycetemcomitans (Actinobacillus actinomycetemcomitans).